We begin with the raw amino-acid sequence, 183 residues long: Probable GTP-binding protein EngB (183 aa).

Positions 18-183 constitute an EngB-type G domain; the sequence is DQNEIVFWGR…LSDLVEHFEL (166 aa). GTP contacts are provided by residues 26–33, 52–56, 70–73, 137–140, and 166–168; these read GRSNVGKS, GRTRL, DLPG, TKID, and VSS. Mg(2+)-binding residues include Ser33 and Thr54.

Belongs to the TRAFAC class TrmE-Era-EngA-EngB-Septin-like GTPase superfamily. EngB GTPase family. Requires Mg(2+) as cofactor.

Necessary for normal cell division and for the maintenance of normal septation. The polypeptide is Probable GTP-binding protein EngB (Metamycoplasma arthritidis (strain 158L3-1) (Mycoplasma arthritidis)).